The primary structure comprises 370 residues: Protein rough sheath 2 (370 aa).

2 consecutive HTH myb-type domains span residues 1–53 and 54–108; these read MKER…KNYL and RPGI…EKQQ. 2 consecutive DNA-binding regions (H-T-H motif) follow at residues 27 to 53 and 81 to 104; these read WHLV…KNYL and WKKI…EVFK. The disordered stretch occupies residues 107–129; that stretch reads QQRELRDSRRPPPEPSPDERGRY. A coiled-coil region spans residues 276–340; the sequence is KRVEQQLEME…QVKEEKMAEQ (65 aa).

Homodimer. Interacts with AS2, WRKY1, HIRA, a probable histone chaperone, and RIK, a predicted RNA binding protein. As to expression, expressed in lateral organ promordia.

The protein localises to the nucleus. Transcription factor required for normal cell differentiation. Interacts directly with asymmetric leaves 2 (AS2) to repress the knox homeobox genes. The chain is Protein rough sheath 2 (RS2) from Zea mays (Maize).